The sequence spans 310 residues: N-acetyl-gamma-glutamyl-phosphate reductase (310 aa).

The active site involves cysteine 117.

Belongs to the NAGSA dehydrogenase family. Type 2 subfamily.

It is found in the cytoplasm. It catalyses the reaction N-acetyl-L-glutamate 5-semialdehyde + phosphate + NADP(+) = N-acetyl-L-glutamyl 5-phosphate + NADPH + H(+). It participates in amino-acid biosynthesis; L-arginine biosynthesis; N(2)-acetyl-L-ornithine from L-glutamate: step 3/4. Catalyzes the NADPH-dependent reduction of N-acetyl-5-glutamyl phosphate to yield N-acetyl-L-glutamate 5-semialdehyde. The polypeptide is N-acetyl-gamma-glutamyl-phosphate reductase (Rhizobium etli (strain CIAT 652)).